The sequence spans 620 residues: Palmitoyltransferase ZDHHC17 (620 aa).

Topologically, residues 1-292 (MADALVGYEK…LKMDKEFRQK (292 aa)) are cytoplasmic. ANK repeat units follow at residues 77–106 (ENVTLLHWAAINNRVDLVKYYISKGAIVDQ), 111–140 (LNSTPLHWATRQGHLSMVVQLMKYGADPSL), 144–173 (EGCSCVHLAAQFGHTSIVAYLIAKGQDVDM), 177–207 (NGMTPLMWAAYRTHSVDPTRLLLTFNVSVNL), 212–241 (HKNTALHWAVLAGNTTVISLLLEANANVDA), and 245–274 (KGETPLDLAKQRKNVWMINHLQEARQAKGY). The next 2 membrane-spanning stretches (helical) occupy residues 293 to 313 (VMLGTPFLVIWLVGFIADLDI) and 314 to 334 (DSWLIKGVMYAVMWLVVQFLS). Residues 335–345 (KSFFDHSMHSA) lie on the Cytoplasmic side of the membrane. The chain crosses the membrane as a helical span at residues 346–366 (LPLGIYLATKFWMYITWFYWF). Residues 367–369 (WND) are Lumenal-facing. Residues 370-390 (LPFVTIHLPFLLNSLALFYNF) form a helical membrane-spanning segment. Topologically, residues 391-469 (GKSWKSDPGI…NCVGSGNHRY (79 aa)) are cytoplasmic. The region spanning 425-475 (IFCSTCLIRKPIRSKHCAVCNRCIAKFDHHCPWVGNCVGSGNHRYFMGYLF) is the DHHC domain. Residue Cys455 is the S-palmitoyl cysteine intermediate of the active site. The chain crosses the membrane as a helical span at residues 470-490 (FMGYLFFLLCMICWMMYGCIC). The Lumenal portion of the chain corresponds to 491 to 504 (YWRIHCATSYTKDG). Residues 505-524 (FWIYITQIATCSPWMFWMFL) traverse the membrane as a helical segment. Over 525-620 (NSVFHFMWVA…QTSGSGYQLV (96 aa)) the chain is Cytoplasmic.

It belongs to the DHHC palmitoyltransferase family. AKR/ZDHHC17 subfamily. Autopalmitoylated.

The protein localises to the golgi apparatus membrane. Its subcellular location is the cytoplasmic vesicle membrane. It localises to the presynaptic cell membrane. It catalyses the reaction L-cysteinyl-[protein] + hexadecanoyl-CoA = S-hexadecanoyl-L-cysteinyl-[protein] + CoA. The enzyme catalyses L-cysteinyl-[protein] + tetradecanoyl-CoA = S-tetradecanoyl-L-cysteinyl-[protein] + CoA. It carries out the reaction L-cysteinyl-[protein] + octadecanoyl-CoA = S-octadecanoyl-L-cysteinyl-[protein] + CoA. Its function is as follows. Palmitoyltransferase that catalyzes the addition of palmitate onto various protein substrates and is involved in a variety of cellular processes. Has no stringent fatty acid selectivity and in addition to palmitate can also transfer onto target proteins myristate from tetradecanoyl-CoA and stearate from octadecanoyl-CoA. Plays a role in axonogenesis. The sequence is that of Palmitoyltransferase ZDHHC17 from Danio rerio (Zebrafish).